The sequence spans 398 residues: MVLNHSPPPGLYITGLGSQYPPYLLGPEKLEEFAARFYDVESPGLKKLLQINRSSGIETRSAIRSYESGFATRPEAPTISELAEFYHQAGVDLTTQACKKALRESQISPQHVTHTIGVTCTNQGNPGFDLLVNRKLGLSANVDRMLLHGVGCAGGLAIMRAAAQIACGASMRRKPVRILAFACELCTPNVRHDLAFAEKAPNAENISIAGALFSDAAAAFVLCNEYAMAETEITPLFQLLEWGNSLIPDTVEHMAFFADVDGYRTVLTRDVPQYTKHAIGPMFEKLLPSYQSQIQSSSGEGVGEVAKSLGVSDFDWALHPGGEAIIEGAKQVLGLTEDQLQASREIYRTRGNSSSATVLIVLDRLRSLGKREYVVATSFGPGLAIEMAMLRRCEVDED.

Residues Lys47 and 47–54 (KLLQINRS) each bind CoA. Cys152 acts as the Nucleophile in catalysis. Residue 214 to 215 (SD) coordinates substrate. Residues Leu267, Gly321, 321–324 (GGEA), and Ala324 each bind CoA.

The protein belongs to the thiolase-like superfamily. Chalcone/stilbene synthases family. In terms of assembly, homodimer.

The enzyme catalyses 11 malonyl-CoA + acetyl-CoA + S-adenosyl-L-methionine + 12 NADPH + 22 H(+) = soppiline B + S-adenosyl-L-homocysteine + 12 CO2 + 12 NADP(+) + 12 CoA + 8 H2O. It functions in the pathway secondary metabolite biosynthesis. Functionally, type III polyketide synthase; part of the gene cluster that mediates the biosynthesis of the alkylresorcinols called soppilines. The biosynthesis starts with the HR-PKS pspA-catalyzed carbon chain assembly through nine chain elongation cycles, using acetyl CoA and malonyl CoA as a starter and extender units, respectively, to produce the polyketide soppiline A. In the first round, the KR, DH, and CMeT domains work to produce 2-methyl-2-butenyl thioester. In rounds 2 to 5, the KR, DH, and ER domains fully catalyze the reduction of the elongated beta-ketothioester, resulting in the insertion of eight methylene units. The unusual Z,E,Z-triene motif is likely constructed during rounds 6 to 8. Typically, the DH domain introduces a double bond at an alpha,beta-position of an elongated polyketide chain, with the dehydration of a beta-hydroxy group. The last extension cycle would be carried out with L-oriented beta-ketoreduction by the KR domain to produce beta-hydroxy carboxylic acid soppiline A. The type III PKS pspB intercepts the elongated polyketide chain at round 8 from the HR-PKS pspA, followed by a tri-keto extension and decarboxylative aldol cyclization to produce 1,3,5-trisubstituted alkylresorcinol soppiline B. Subsequently, the cytochrome P450 monooxygenase pspC catalyzes three-step oxidations at the C-4 methyl group to carboxylic acid to yield soppiline C. In Penicillium soppii, this protein is Type III polyketide synthase pspB.